The sequence spans 345 residues: Phosphoribosylformylglycinamidine cyclo-ligase (345 aa).

Belongs to the AIR synthase family.

The protein localises to the cytoplasm. The enzyme catalyses 2-formamido-N(1)-(5-O-phospho-beta-D-ribosyl)acetamidine + ATP = 5-amino-1-(5-phospho-beta-D-ribosyl)imidazole + ADP + phosphate + H(+). Its pathway is purine metabolism; IMP biosynthesis via de novo pathway; 5-amino-1-(5-phospho-D-ribosyl)imidazole from N(2)-formyl-N(1)-(5-phospho-D-ribosyl)glycinamide: step 2/2. The protein is Phosphoribosylformylglycinamidine cyclo-ligase of Shewanella oneidensis (strain ATCC 700550 / JCM 31522 / CIP 106686 / LMG 19005 / NCIMB 14063 / MR-1).